A 155-amino-acid chain; its full sequence is Large ribosomal subunit protein eL24 (155 aa).

Residues 93 to 123 (KRNARPETRNATRAKHAEAAKERKEKEAERR) show a composition bias toward basic and acidic residues. A disordered region spans residues 93–155 (KRNARPETRN…SAPKVQATSR (63 aa)).

Belongs to the eukaryotic ribosomal protein eL24 family.

The polypeptide is Large ribosomal subunit protein eL24 (RPL24) (Yarrowia lipolytica (strain CLIB 122 / E 150) (Yeast)).